The sequence spans 757 residues: Mitofusin-2 (757 aa).

Residues 1–604 are Cytoplasmic-facing; sequence MSLLFSRCNS…TQEELMVSMV (604 aa). Residues 30-94 form a part of a helix bundle domain, formed by helices from N-terminal and C-terminal regions region; sequence KHFVTAKKKI…VRGISEVLAR (65 aa). Residues 93–342 enclose the Dynamin-type G domain; it reads ARRHMKVAFF…VRMFEFQNFE (250 aa). Residues 103-110 form a G1 motif region; the sequence is GRTSNGKS. GTP is bound at residue 106–111; it reads SNGKST. The residue at position 111 (T111) is a Phosphothreonine; by PINK1. The G2 motif stretch occupies residues 129 to 130; sequence TT. The G3 motif stretch occupies residues 199-202; the sequence is DSPG. Residue 258 to 261 coordinates GTP; sequence NRWD. A G4 motif region spans residues 258–261; sequence NRWD. A region of interest (G5 motif) is located at residue E288. S305 and K307 together coordinate GTP. The interval 359–385 is part of a helix bundle domain, formed by helices from N-terminal and C-terminal regions; sequence EQHTVRAKQIAEAVRLIMDSLHIAAQE. A coiled-coil region spans residues 406-435; that stretch reads KQLELLAQDYKLRIKQMTEEVERQVSTAMA. S442 bears the Phosphoserine; by PINK1 mark. A helical membrane pass occupies residues 605 to 625; it reads TGLASLTSRTSMGILVVGGVV. Position 626 (W626) is a topological domain, mitochondrial intermembrane. Residues 627 to 647 traverse the membrane as a helical segment; it reads KAVGWRLIALSFGLYGLLYVY. Over 648–757 the chain is Cytoplasmic; sequence ERLTWTTRAK…FIHQYLQPSR (110 aa). The stretch at 696–738 forms a coiled coil; sequence FAHLCQQVDITRDNLEQEIAAMNKKVEALDSLQSKAKLLRNKA. The segment at 722–753 is part of a helix bundle domain, formed by helices from N-terminal and C-terminal regions; sequence EALDSLQSKAKLLRNKAGWLDSELNMFIHQYL.

It belongs to the TRAFAC class dynamin-like GTPase superfamily. Dynamin/Fzo/YdjA family. Mitofusin subfamily. As to quaternary structure, forms homomultimers and heteromultimers with MFN1. Oligomerization is essential for mitochondrion fusion. Interacts with VAT1. Interacts with STOML2; may form heterooligomers. Interacts (phosphorylated) with PRKN. Interacts with EIF2AK3. Interacts with THG1L; THG1L probably functions as a guanyl-nucleotide exchange factor/GEF, activating MFN2. Phosphorylated by PINK1. In terms of processing, ubiquitinated by non-degradative ubiquitin by PRKN, promoting mitochondrial fusion; deubiquitination by USP30 inhibits mitochondrial fusion. Ubiquitinated by HUWE1 when dietary stearate (C18:0) levels are low; ubiquitination inhibits mitochondrial fusion. In terms of tissue distribution, ubiquitous. In brain, it is more expressed than MFN1, while it is expressed at a weaker level than MFN1 in heart and testis. Expressed at high level in elongating spermatids of seminiferous tubules. Expression is markedly down-regulated in highly proliferative vascular smooth muscle cells (VSMCs) from the genetic hypertensive animal model SHR, as well as in balloon-injured Wistar Kyoto arteries.

It localises to the mitochondrion outer membrane. The catalysed reaction is GTP + H2O = GDP + phosphate + H(+). Mitochondrial outer membrane GTPase that mediates mitochondrial clustering and fusion. Mitochondria are highly dynamic organelles, and their morphology is determined by the equilibrium between mitochondrial fusion and fission events. Overexpression induces the formation of mitochondrial networks. Membrane clustering requires GTPase activity and may involve a major rearrangement of the coiled coil domains. Plays a central role in mitochondrial metabolism and may be associated with obesity and/or apoptosis processes. Plays an important role in the regulation of vascular smooth muscle cell proliferation. Involved in the clearance of damaged mitochondria via selective autophagy (mitophagy). Is required for PRKN recruitment to dysfunctional mitochondria. Involved in the control of unfolded protein response (UPR) upon ER stress including activation of apoptosis and autophagy during ER stress. Acts as an upstream regulator of EIF2AK3 and suppresses EIF2AK3 activation under basal conditions. The protein is Mitofusin-2 (Mfn2) of Rattus norvegicus (Rat).